The chain runs to 515 residues: Glucose-6-phosphate 1-dehydrogenase 6, cytoplasmic (515 aa).

NADP(+) is bound by residues 38–45, Arg-73, Tyr-155, and Lys-182; that span reads GASGDLAK. D-glucose 6-phosphate contacts are provided by residues Lys-182, 212–216, Glu-250, and Asp-269; that span reads HYLGK. The Proton acceptor role is filled by His-274. Lys-357 is a binding site for NADP(+). D-glucose 6-phosphate is bound by residues Lys-360 and Arg-365. NADP(+) contacts are provided by Lys-366, Arg-370, and Arg-394. D-glucose 6-phosphate is bound at residue Gln-396. NADP(+)-binding positions include 402–404, 422–424, Arg-488, and Trp-510; these read YMK and DLS.

Belongs to the glucose-6-phosphate dehydrogenase family. Forms homodimer. In terms of tissue distribution, expressed in roots, leaves, stems, buds, flowers and siliques.

The protein resides in the cytoplasm. Its subcellular location is the cytosol. It carries out the reaction D-glucose 6-phosphate + NADP(+) = 6-phospho-D-glucono-1,5-lactone + NADPH + H(+). The protein operates within carbohydrate degradation; pentose phosphate pathway; D-ribulose 5-phosphate from D-glucose 6-phosphate (oxidative stage): step 1/3. Its activity is regulated as follows. Regulated by metabolites. Functionally, catalyzes the rate-limiting step of the oxidative pentose-phosphate pathway, which represents a route for the dissimilation of carbohydrates besides glycolysis. The main function of this enzyme is to provide reducing power (NADPH) and pentose phosphates for fatty acid and nucleic acid synthesis which are involved in membrane synthesis and cell division. This Arabidopsis thaliana (Mouse-ear cress) protein is Glucose-6-phosphate 1-dehydrogenase 6, cytoplasmic.